Here is a 289-residue protein sequence, read N- to C-terminus: Mas-related G-protein coupled receptor member G (289 aa).

Over 1–13 (MFGLFGLWRTFDS) the chain is Extracellular. The chain crosses the membrane as a helical span at residues 14 to 34 (VVFYLTLIVGLGGPVGNGLVL). The Cytoplasmic portion of the chain corresponds to 35–42 (WNLGFRIK). Residues 43–63 (KGPFSIYLLHLAAADFLFLSC) traverse the membrane as a helical segment. The Extracellular portion of the chain corresponds to 64 to 78 (RVGFSVAQAALGAQD). Residues 79–99 (TLYFVLTFLWFAVGLWLLAAF) form a helical membrane-spanning segment. Over 100–120 (SVERCLSDLFPACYQGCRPRH) the chain is Cytoplasmic. Residues 121–141 (ASAVLCALVWTPTLPAVPLPA) traverse the membrane as a helical segment. Over 142–163 (NACGLLRNSACPLVCPRYHVAS) the chain is Extracellular. A helical membrane pass occupies residues 164 to 184 (VTWFLVLARVAWTAGVVLFVW). The Cytoplasmic segment spans residues 185–195 (VTCCSTRPRPR). Residues 196–216 (LYGIVLGALLLLFFCGLPSVF) form a helical membrane-spanning segment. Topologically, residues 217–221 (YWSLQ) are extracellular. Residues 222–242 (PLLNFLLPVFSPLATLLACVN) traverse the membrane as a helical segment. Residues 243–289 (SSSKPLIYSGLGRQPGKREPLRSVLRRALGEGAELGARGQSLPMGLL) lie on the Cytoplasmic side of the membrane.

This sequence belongs to the G-protein coupled receptor 1 family. Mas subfamily.

Its subcellular location is the cell membrane. Orphan receptor. May regulate nociceptor function and/or development, including the sensation or modulation of pain. The sequence is that of Mas-related G-protein coupled receptor member G (MRGPRG) from Homo sapiens (Human).